The following is a 2512-amino-acid chain: Probable polyketide synthase 5 (2512 aa).

The Ketosynthase family 3 (KS3) domain maps to 17 to 447; the sequence is MKGVAIVGIG…GSNCCLLISE (431 aa). Catalysis depends on for beta-ketoacyl synthase activity residues Cys187, His329, and His368. The tract at residues 638–671 is acyl/malonyl transferase; sequence GVNPSFILGHSLGEIPTSYCSGMIDLDTFCYTVY. Ser648 acts as the For acyl/malonyl transferase activity in catalysis. Positions 928 to 1050 are N-terminal hotdog fold; that stretch reads IDHLGLSNSY…ANFQLLDHTI (123 aa). In terms of domain architecture, PKS/mFAS DH spans 928-1210; sequence IDHLGLSNSY…SKSLIPIKEL (283 aa). His962 functions as the Proton acceptor; for dehydratase activity in the catalytic mechanism. The tract at residues 1067 to 1210 is C-terminal hotdog fold; that stretch reads TLARLTKNEI…SKSLIPIKEL (144 aa). Asp1125 acts as the Proton donor; for dehydratase activity in catalysis. The Carrier domain occupies 2430–2507; that stretch reads AGSKNVDELF…VSIKIILNFL (78 aa). Ser2467 bears the O-(pantetheine 4'-phosphoryl)serine mark.

The cofactor is pantetheine 4'-phosphate.

Functionally, probable polyketide synthase. This is Probable polyketide synthase 5 (pks5) from Dictyostelium discoideum (Social amoeba).